The primary structure comprises 445 residues: Gamma-glutamyl phosphate reductase (445 aa).

It belongs to the gamma-glutamyl phosphate reductase family.

The protein resides in the cytoplasm. The enzyme catalyses L-glutamate 5-semialdehyde + phosphate + NADP(+) = L-glutamyl 5-phosphate + NADPH + H(+). Its pathway is amino-acid biosynthesis; L-proline biosynthesis; L-glutamate 5-semialdehyde from L-glutamate: step 2/2. In terms of biological role, catalyzes the NADPH-dependent reduction of L-glutamate 5-phosphate into L-glutamate 5-semialdehyde and phosphate. The product spontaneously undergoes cyclization to form 1-pyrroline-5-carboxylate. This Synechococcus sp. (strain RCC307) protein is Gamma-glutamyl phosphate reductase.